We begin with the raw amino-acid sequence, 347 residues long: ATPase GET3 (347 aa).

26-33 (KGGVGKTT) is an ATP binding site. D57 is a catalytic residue. E240 and N267 together coordinate ATP. 2 residues coordinate Zn(2+): C279 and C282.

The protein belongs to the arsA ATPase family. Homodimer. Component of the Golgi to ER traffic (GET) complex, which is composed of GET1, GET2 and GET3. Within the complex, GET1 and GET2 form a heterotetramer which is stabilized by phosphatidylinositol binding and which binds to the GET3 homodimer. Interacts with the chloride channel protein GEF1.

It is found in the cytoplasm. The protein localises to the endoplasmic reticulum. It localises to the golgi apparatus. Its function is as follows. ATPase required for the post-translational delivery of tail-anchored (TA) proteins to the endoplasmic reticulum. Recognizes and selectively binds the transmembrane domain of TA proteins in the cytosol. This complex then targets to the endoplasmic reticulum by membrane-bound receptors GET1 and GET2, where the tail-anchored protein is released for insertion. This process is regulated by ATP binding and hydrolysis. ATP binding drives the homodimer towards the closed dimer state, facilitating recognition of newly synthesized TA membrane proteins. ATP hydrolysis is required for insertion. Subsequently, the homodimer reverts towards the open dimer state, lowering its affinity for the GET1-GET2 receptor, and returning it to the cytosol to initiate a new round of targeting. Cooperates with the HDEL receptor ERD2 to mediate the ATP-dependent retrieval of resident ER proteins that contain a C-terminal H-D-E-L retention signal from the Golgi to the ER. Involved in low-level resistance to the oxyanions arsenite and arsenate, and in heat tolerance. The polypeptide is ATPase GET3 (Scheffersomyces stipitis (strain ATCC 58785 / CBS 6054 / NBRC 10063 / NRRL Y-11545) (Yeast)).